A 552-amino-acid chain; its full sequence is Hyaluronan synthase 2 (552 aa).

Over 1-11 (MHCERFLCILR) the chain is Cytoplasmic. The helical transmembrane segment at 12–32 (IIGTTLFGVSLLLGITAAYIV) threads the bilayer. The Extracellular segment spans residues 33–45 (GYQFIQTDNYYFS). Residues 46–66 (FGLYGAFLASHLIIQSLFAFL) traverse the membrane as a helical segment. Topologically, residues 67–374 (EHRKMKKSLE…NAMWFHKHHL (308 aa)) are cytoplasmic. T110 bears the Phosphothreonine mark. K190 is covalently cross-linked (Glycyl lysine isopeptide (Lys-Gly) (interchain with G-Cter in ubiquitin)). A glycan (O-linked (GlcNAc) serine) is linked at S221. The residue at position 328 (T328) is a Phosphothreonine. The chain crosses the membrane as a helical span at residues 375-395 (WMTYEAIITGFFPFFLIATVI). Over 396–402 (QLFYRGK) the chain is Extracellular. Residues 403–423 (IWNILLFLLTVQLVGLIKSSF) traverse the membrane as a helical segment. Residues 424–429 (ASCLRG) are Cytoplasmic-facing. Residues 430–450 (NIVMVFMSLYSVLYMSSLLPA) traverse the membrane as a helical segment. Topologically, residues 451 to 475 (KMFAIATINKAGWGTSGRKTIVVNF) are extracellular. The helical transmembrane segment at 476–496 (IGLIPVSVWFTILLGGVIFTI) threads the bilayer. The Cytoplasmic segment spans residues 497 to 510 (YKESKRPFSESKQT). The chain crosses the membrane as a helical span at residues 511-531 (VLIVGTLLYACYWVMLLTLYV). Residues 532–552 (VLINKCGRRKKGQQYDMVLDV) lie on the Extracellular side of the membrane.

It belongs to the NodC/HAS family. In terms of assembly, homodimer; dimerization promotes enzymatic activity. Forms heterodimer with HAS3. Forms heterodimer with HAS1. Requires Mg(2+) as cofactor. Phosphorylation at Thr-328 is essential for hyaluronan synthase activity. Phosphorylation at Thr-110 is required for transport from ER to Golgi. Post-translationally, O-GlcNAcylation at Ser-221 increases the stability of HAS2 and plasma membrane localization. In terms of processing, ubiquitination at Lys-190; this ubiquitination is essential for hyaluronan synthase activity and homo- or hetero-oligomerization. Can also be poly-ubiquitinated. Deubiquitinated by USP17 and USP4. USP17 efficiently removes 'Lys-63'- and 'Lys-48'-linked polyubiquitin chains, whereas USP4 preferentially removes monoubiquitination and, partially, both 'Lys-63'- and 'Lys-48'-linked polyubiquitin chain. In terms of tissue distribution, expressed in fibroblasts.

Its subcellular location is the cell membrane. It localises to the endoplasmic reticulum membrane. The protein resides in the vesicle. The protein localises to the golgi apparatus membrane. It is found in the lysosome. The enzyme catalyses [hyaluronan](n) + UDP-N-acetyl-alpha-D-glucosamine = N-acetyl-beta-D-glucosaminyl-(1-&gt;4)-[hyaluronan](n) + UDP + H(+). It catalyses the reaction N-acetyl-beta-D-glucosaminyl-(1-&gt;4)-[hyaluronan](n) + UDP-alpha-D-glucuronate = [hyaluronan](n+1) + UDP + H(+). Its pathway is glycan biosynthesis; hyaluronan biosynthesis. Its activity is regulated as follows. Regulated by several post-translational modifications such as ubiquitination/deubiquitination, phosphorylation and O-GlcNAcylation. The enzymatic activity depends on the availability of UDP-GlcUA and UDP-GlcNAc. Functionally, catalyzes the addition of GlcNAc or GlcUA monosaccharides to the nascent hyaluronan polymer. Therefore, it is essential to hyaluronan synthesis a major component of most extracellular matrices that has a structural role in tissues architectures and regulates cell adhesion, migration and differentiation. This is one of three isoenzymes responsible for cellular hyaluronan synthesis and it is particularly responsible for the synthesis of high molecular mass hyaluronan. This is Hyaluronan synthase 2 from Homo sapiens (Human).